The following is a 1086-amino-acid chain: Calcium-transporting ATPase 9, plasma membrane-type (1086 aa).

The segment covering 1–15 has biased composition (low complexity); sequence MSTSSSNGLLLTSMS. A disordered region spans residues 1–50; that stretch reads MSTSSSNGLLLTSMSGRHDDMEAGSAKTEEHSDHEELQHDPDDPFDIDNT. Residues 1-194 are Cytoplasmic-facing; sequence MSTSSSNGLL…NTYPKKKGKN (194 aa). The segment covering 16–42 has biased composition (basic and acidic residues); that stretch reads GRHDDMEAGSAKTEEHSDHEELQHDPD. The tract at residues 57–68 is interaction with calmodulin; it reads SLRRWRQAALVL. Residues 195-215 form a helical membrane-spanning segment; it reads FFMFLWEAWQDLTLIILIIAA. Over 216–233 the chain is Lumenal; it reads VTSLALGIKTEGLKEGWL. The helical transmembrane segment at 234–254 threads the bilayer; that stretch reads DGGSIAFAVLLVIVVTAVSDY. Residues 255 to 382 are Cytoplasmic-facing; that stretch reads RQSLQFQNLN…GEETPLQVRL (128 aa). A helical transmembrane segment spans residues 383–402; that stretch reads NGLATFIGIVGLSVALVVLV. Residues 403–439 lie on the Lumenal side of the membrane; the sequence is ALLVRYFTGTTQDTNGATQFIKGTTSISDIVDDCVKI. Residues 440–457 form a helical membrane-spanning segment; that stretch reads FTIAVTIVVVAVPEGLPL. Topologically, residues 458 to 857 are cytoplasmic; sequence AVTLTLAYSM…RWGRSVYANI (400 aa). The active-site 4-aspartylphosphate intermediate is Asp-495. 2 residues coordinate Mg(2+): Asp-802 and Asp-806. The chain crosses the membrane as a helical span at residues 858–876; that stretch reads QKFIQFQLTVNVAALIINV. The Lumenal segment spans residues 877-887; the sequence is VAAMSSGDVPL. Residues 888–908 traverse the membrane as a helical segment; that stretch reads KAVQLLWVNLIMDTLGALALA. The Cytoplasmic segment spans residues 909–928; it reads TEPPTDHLMHRTPVGRREPL. Residues 929–951 form a helical membrane-spanning segment; sequence ITNIMWRNLLVQSFYQVAVLLVL. Residues 952 to 963 are Lumenal-facing; that stretch reads NFAGLSILGLNH. A helical transmembrane segment spans residues 964 to 988; the sequence is ENHAHAVEVKNTMIFNAFVMCQIFN. Residues 989-1006 lie on the Cytoplasmic side of the membrane; the sequence is EFNARKPDEMNVFRGVNK. Residues 1007–1028 form a helical membrane-spanning segment; the sequence is NPLFVAIVGVTFILQIIIVTFL. Residues 1029 to 1038 lie on the Lumenal side of the membrane; that stretch reads GKFAHTVRLG. Residues 1039–1060 traverse the membrane as a helical segment; it reads WQLWLASIIIGLVSWPLAIVGK. At 1061 to 1086 the chain is on the cytoplasmic side; sequence LIPVPKTPMSVYFKKPFRKYKASRNA.

It belongs to the cation transport ATPase (P-type) (TC 3.A.3) family. Type IIB subfamily.

It is found in the membrane. It carries out the reaction Ca(2+)(in) + ATP + H2O = Ca(2+)(out) + ADP + phosphate + H(+). Activated by calmodulin. Its function is as follows. This magnesium-dependent enzyme catalyzes the hydrolysis of ATP coupled with the translocation of calcium from the cytosol out of the cell or into organelles. The sequence is that of Calcium-transporting ATPase 9, plasma membrane-type (ACA9) from Arabidopsis thaliana (Mouse-ear cress).